The sequence spans 322 residues: Mas-related G-protein coupled receptor member X3 (322 aa).

The Extracellular segment spans residues 1-31 (MDPTIPALGTSQTPINRREETPCYKQTLSLT). The helical transmembrane segment at 32 to 52 (VLTCIISLVGLTGNAVVLWLL) threads the bilayer. Residues 53–60 (GFRMRRNA) are Cytoplasmic-facing. A helical transmembrane segment spans residues 61-81 (VSTYILNLAAVDFLFLSGHIV). Topologically, residues 82 to 96 (RSPLRLISIRHPISK) are extracellular. The helical transmembrane segment at 97 to 117 (IVNPVMTFPYFIGLSMLSAIS) threads the bilayer. Residues 118-139 (TERCLSVLWPMWYRCRRPRHLS) are Cytoplasmic-facing. The helical transmembrane segment at 140-160 (VVVCVLLWALSLLRSILEWMF) threads the bilayer. The Extracellular segment spans residues 161-177 (CDFLFSGADSVWCETSD). A helical transmembrane segment spans residues 178 to 198 (FITIAWLIFLCVVLCGSSLVL). At 199–213 (LVRILCGSRKMPLTR) the chain is on the cytoplasmic side. A helical transmembrane segment spans residues 214-234 (LYVTILLTVLVFLLCGLPFGI). Topologically, residues 235 to 254 (QWALFSRIHLDWKVLFCHVH) are extracellular. A helical transmembrane segment spans residues 255-275 (LISVFLSSLNSSANPIIYFFV). Residues 276–322 (GSFRQRQNRQNLKLVLQRALQDTPEVDEGGGRLPEETLELSVSRLEQ) are Cytoplasmic-facing.

Belongs to the G-protein coupled receptor 1 family. Mas subfamily.

The protein resides in the cell membrane. In terms of biological role, orphan receptor. Probably involved in the function of nociceptive neurons. May regulate nociceptor function and/or development, including the sensation or modulation of pain. Potently activated by enkephalins. The polypeptide is Mas-related G-protein coupled receptor member X3 (MRGPRX3) (Macaca mulatta (Rhesus macaque)).